A 188-amino-acid polypeptide reads, in one-letter code: HGPRTase-like protein (188 aa).

It belongs to the purine/pyrimidine phosphoribosyltransferase family. Archaeal HPRT subfamily.

Functionally, may catalyze a purine salvage reaction, the substrate is unknown. The protein is HGPRTase-like protein of Halobacterium salinarum (strain ATCC 29341 / DSM 671 / R1).